Here is a 158-residue protein sequence, read N- to C-terminus: Protein-export protein SecB (158 aa).

The protein belongs to the SecB family. Homotetramer, a dimer of dimers. One homotetramer interacts with 1 SecA dimer.

The protein resides in the cytoplasm. In terms of biological role, one of the proteins required for the normal export of preproteins out of the cell cytoplasm. It is a molecular chaperone that binds to a subset of precursor proteins, maintaining them in a translocation-competent state. It also specifically binds to its receptor SecA. This Rhodopseudomonas palustris (strain HaA2) protein is Protein-export protein SecB.